The following is a 258-amino-acid chain: Aquaglyceroporin (258 aa).

The Cytoplasmic portion of the chain corresponds to 1–11 (MHMLFYKSYVR). The chain crosses the membrane as a helical span at residues 12 to 32 (EFIGEFLGTFVLMFLGEGATA). Residues 33–45 (NFHTTGLSGDWYK) are Extracellular-facing. A helical transmembrane segment spans residues 46–66 (LCLGWGLAVFFGILVSAKLSG). Gly-66, Ala-67, and Asn-70 together coordinate glycerol. Over 67 to 87 (AHLNLAVSIGLSSINKFDLKK) the chain is Cytoplasmic. A helical membrane pass occupies residues 88 to 108 (IPVYFFAQLLGAFVGTSTVYG). Residues 109 to 135 (LYHGFISNSKIPQFAWETSRNPSISLT) are Extracellular-facing. Residue Ser-127 coordinates glycerol. A helical transmembrane segment spans residues 136 to 156 (GAFFNELILTGILLLVILVVV). Residues 157–171 (DENICGKFHILKLSS) are Cytoplasmic-facing. A helical membrane pass occupies residues 172–192 (VVGLIILCIGITFGGNTGFAL). Glycerol is bound by residues Gly-189, Phe-190, Asn-193, and Arg-196. Residues 193–217 (NPSRDLGSRFLSLIAYGKDTFTKDN) lie on the Extracellular side of the membrane. The chain crosses the membrane as a helical span at residues 218-238 (FYFWVPLVAPCVGSVVFCQFY). Residues 239–258 (DKVICPLVDLANNEKDGVDL) are Cytoplasmic-facing.

It belongs to the MIP/aquaporin (TC 1.A.8) family. As to quaternary structure, homotetramer.

The protein localises to the cell membrane. It carries out the reaction H2O(in) = H2O(out). It catalyses the reaction glycerol(in) = glycerol(out). The catalysed reaction is urea(in) = urea(out). The enzyme catalyses NH4(+)(in) = NH4(+)(out). It carries out the reaction methylamine(out) = methylamine(in). It catalyses the reaction formamide(out) = formamide(in). Its function is as follows. Mediates water and glycerol transport across the cell membrane. Permeable to sugar alcohols of up to five carbons and urea. Permeable to ammonia, methylamine and formamide. The sequence is that of Aquaglyceroporin from Plasmodium falciparum (isolate 3D7).